We begin with the raw amino-acid sequence, 379 residues long: Putative 2-hydroxyacid dehydrogenase YGL185C (379 aa).

NAD(+) contacts are provided by residues 207–208 (SI), 291–293 (LGR), and D317. R293 is an active-site residue. E322 is a catalytic residue. The active-site Proton donor is H341. 341–344 (HLGS) provides a ligand contact to NAD(+).

It belongs to the D-isomer specific 2-hydroxyacid dehydrogenase family.

In Saccharomyces cerevisiae (strain ATCC 204508 / S288c) (Baker's yeast), this protein is Putative 2-hydroxyacid dehydrogenase YGL185C.